A 409-amino-acid polypeptide reads, in one-letter code: Serine/threonine transporter SstT (409 aa).

9 helical membrane-spanning segments follow: residues 14–34, 48–68, 82–102, 141–161, 192–212, 216–236, 290–310, 322–342, and 357–377; these read GSLV…ATLS, FVGA…AASI, IVIL…LMSF, ALMT…GLAL, IGIF…AIAG, LLLV…PAIV, IPLG…ILTL, ILTA…ASGV, and FGIS…IGVI.

This sequence belongs to the dicarboxylate/amino acid:cation symporter (DAACS) (TC 2.A.23) family.

The protein localises to the cell inner membrane. It catalyses the reaction L-serine(in) + Na(+)(in) = L-serine(out) + Na(+)(out). The enzyme catalyses L-threonine(in) + Na(+)(in) = L-threonine(out) + Na(+)(out). Its function is as follows. Involved in the import of serine and threonine into the cell, with the concomitant import of sodium (symport system). The polypeptide is Serine/threonine transporter SstT (Shewanella woodyi (strain ATCC 51908 / MS32)).